A 47-amino-acid chain; its full sequence is Large ribosomal subunit protein bL27c-2 (47 aa).

It belongs to the bacterial ribosomal protein bL27 family.

It is found in the plastid. Its subcellular location is the chloroplast. In Cyanidium caldarium (Red alga), this protein is Large ribosomal subunit protein bL27c-2.